Here is a 224-residue protein sequence, read N- to C-terminus: Prolactin-3D1 (224 aa).

Residues 1–29 (MQLTLNLSGSAGMQLLLLVSSLLLWENVS) form the signal peptide. Intrachain disulfides connect Cys-81/Cys-199 and Cys-216/Cys-224. Residues Asn-109 and Asn-158 are each glycosylated (N-linked (GlcNAc...) asparagine).

It belongs to the somatotropin/prolactin family.

The protein localises to the secreted. The sequence is that of Prolactin-3D1 (Prl3d1) from Mus musculus (Mouse).